The primary structure comprises 162 residues: Protein-export protein SecB (162 aa).

Belongs to the SecB family. As to quaternary structure, homotetramer, a dimer of dimers. One homotetramer interacts with 1 SecA dimer.

Its subcellular location is the cytoplasm. Its function is as follows. One of the proteins required for the normal export of preproteins out of the cell cytoplasm. It is a molecular chaperone that binds to a subset of precursor proteins, maintaining them in a translocation-competent state. It also specifically binds to its receptor SecA. This Bradyrhizobium sp. (strain BTAi1 / ATCC BAA-1182) protein is Protein-export protein SecB.